The following is a 161-amino-acid chain: Nucleotide-binding protein XOO0647 (161 aa).

Belongs to the YajQ family.

Functionally, nucleotide-binding protein. In Xanthomonas oryzae pv. oryzae (strain MAFF 311018), this protein is Nucleotide-binding protein XOO0647.